We begin with the raw amino-acid sequence, 3084 residues long: MASPIPLAVVGIACRFPGDATNPEKLWDLLAEGKSAWSRVPSDRWNEEAFLHPSPDDMNGSHNHLGGHFLRQDVGEFDAGFFNVLPGEAAAMDPQQRLLLETTYEAIESAGIPKESLAGSKTAVYMAMFTRDYDRNVYKDMMSIPKYHVTGTGDAILANRISYLFDLRGPSMTIDTGCSGGMAAVAHACQALRSGVSDVALAGAANLILSPDHMVGMSNLHMLNAEGKSYAFDDRGAGYGRGEGIATLVIKRLDDAIKANDPIRAIIRDAAVNQDGHTAGITLPSGQAQEALERQVWSNIGLDPREVGYVEAHGTGTQAGDSAELEGISRVFCRGRTDSESLTVGSIKSNIGHTECVSGLAALIKSILVLEKGAIPPNVNYQTAKPGLDLDKRKLRVPTTLQKWSQPGVPRVSVNSFGYGGTNAHAVLEKAPETQRDSASDSQEDVPRLFTLSAASQSSLQDMAASIAGWVSQERDSQPLPTSRLQDIAYTLSERRSLMAWRFWSVASNEHELVDSLYEASRSTENISKISSSEPPPKISFIFTGQGAQWPGMGRELLQSNAVFAESISRSNKILAGLGAAWGLVDEILRDKGPSRLREAELAQPATTAIQIALVDLARHWGIVPDSVVGHSSGEIAAAYAAGYLSPQQAITAAYYRGFSSAVARSKGLGKGGMLAVGLGEDEVAPYLARISPENGEAVVACQNSPKSVTISGDDAAIAELSELLTKDDVFNRRLLVDTAYHSHHMEAAADEYRSSLGDMEPRNSTGTINMFSSVTGSLKTDDKFDANYWVSNLVGKVRFRDALQALCQHDQTSSSPQTHRVFIEIGPHAALAGPLRQSVADMPTPLPHSYTSALVRGTSASQSALSMAGSLFSRGYPLNISALNSASSLSSSSSPSVIPNLPTYAWDHTKRHWHESRLSRDYRMRKHAYHDLLGLRMTDTTPLRPAWRHMVGVEGLPWLRDHVVDGLIVFPGAGYMCMALQAAEQLALDLPSHSKVKRMRLQNVAFLKGLVIPDSTRERVEVQLVLTPLTGDNGPDNKLGYSFLVTAYTADDDKWTEHCRGSVLIDLVSSSAASSQSTVGFESQHQITYAEAVSSLNLQPGEDIPPSELYQTLRKGGNAYGPTFSGIQVFRLLPDNASEDTSSANVALSTIAIPDIQSIMPAKHMQPHIIHPSTLDVLLHTTLPLVSRRLGVVGSVMPVRIDDLVIDLGEQQLETKTDAQLRAITTLTGSGFRSAEADMLVFPAPSSEVDQGQLMPVISVMGMELRSLAALDGAAAGDPATENLSVEESRDICYEMKWVVDESFLSAEHLVNAVQQRDSSFDTPLERCLGALDKYLGIKALKEFMADLKVLEIAAAGDSNGECTLAFLDALQTRGALPAEYDLTAQPHGDALWQDKYPGVVTVRPLLDSMNHGLDGHYDIVFAAGSLNGSDGVTVQTSLSNIRSLMKPGAVLVAIHDTNSSLSADVFSQTGFNTQLSIPFDELSLTIARAVGSASTTTPVKLQFIAEPGFSTSTSIRTIIDNLPSTLTAKGVQIITAPEPCILNWTKGNLYDQDSDSEPVTLNIVLDNGASPILPTVTNGTPTFSNIVSLLQKQHSKVLWVSLSDDEQHKLNPQKHLITGVARTAHAENELLELVTVDVQQPISESTTSGLVNFLGDIAASFPGLDGAAGETGTKKEREYIYIGENHILVPRVMSSPSLNRQIKKSKETVTSTENFVMTPLKLDIAGKDGPGTAHAATFVEDESHRQPLGEDCVEIQAKAFGVGSSSWASKGRPSSASSIAEYAGVITAIGSGVLISSGLKIGDRVVAWAETSLSFASRPRIPASQVRVLPDHVSLSTGAGLPVSLMTACHALREISNVQPGQVVFIDGAASDIGQAALLVARYLGAKVIVAVSTSDEASFLQDKFGLPLANILPRASPFLRHQLRKLLASGGAIDAILSCAGSAVPGEIIKTQKPFGTLVQVGGTTGAMTASAVNSTVVSLDLGSFLTQTHPSKATRLFDMAMETVHRGLDLEPIRIAYLPMTNLNEALKSARRHENMTKYVVEVGQEAMVKVARPSYILPKLDEHATYVVAGGLGDLGQRFLRLMAKAGARYLVTLSRSGAREGQQSALERELNSLSPLSSLNLLCLKCDVSKEAKIQNSLAEIKAAGFPSVRGVIQASLVLGDSTLDNMTAQDFDRVLQAKAFGTLHLQRVFVPEGLAFFISLSSAVNMIGSAGQANYNAANSLQDALAQFDKSSDCFYMALNIGLIEDATVNSDVIIQSVQRQGLTTIYHDELDAYFEYSLSAEARQAGCHQAVIGFTPESIAKTSIVNGTAKTLMFTHVRRQISKQGQTEDDDAGGASGAVKTFAEFVAQGTHEQDDIEAFAARAIANKLADLMLIEPEDVELDESLNDFGLDSLIAIELRNWIMRELGSPIQTSEVLGSENIWALARKVTLRSVHVTGGAGGDASSTGNSESMARTPSDSSTVPTSIPATPSRSPSREPPAKETLTKSQQHLPIPDLTETLNMLVESRTAIGSLEEKAEIERVIQDFLTTDGPELVEILRSNNDSSSDARLDFYNNHLHLERREPLQDHALFFIGHLAEGEAGAAPPPKHTQAERAAIITGAAMHFKQRLESGSLEQHKLNDIVLCMDTLQWLFHTIQEPGVATDLAQKYPSNNKVVAMRKGHIFEIDVHPEDDYAALHQIFSDIIASSDSSSDSIPKVSVLTTKPRHEWAVLRSQIQSLSPTNAETIDAIESCAFIVSLDHSSPETTSERSTSILLNDLHLSNRWLDKMLTFTVASNGVSSLLGENTMLDGLSARQLSEYMTNEIFTNPKLSPPTSPPASTIRPLLFTLTPHVVETISQQIQHNLSTYHPISSSRHFYSQLNRAFLGSRGMRSKGTVLVAIAMATRLFFGHYEPLWETVTLAKYKQGRIDWLQTLTPDMVAFVDSLIAIHSHSLTSSSEVDWKGMNKLLKEVSISHVQNLQRVADGRGYVEALYSLMGTAISQGHDLPELFKSEAWKQTDRHLSPKRAKTDCLGSGGYLRMQEGGFLMPNPGSLFIHYEVHHRDPLVNVSGREEDVARFEGILGACLGVVRRVVEG.

A Ketosynthase family 3 (KS3) domain is found at 4–430 (PIPLAVVGIA…GTNAHAVLEK (427 aa)). Catalysis depends on for beta-ketoacyl synthase activity residues Cys-178, His-313, and His-353. The segment at 541-841 (FIFTGQGAQW…LAGPLRQSVA (301 aa)) is malonyl-CoA:ACP transacylase (MAT) domain. Ser-632 serves as the catalytic For malonyltransferase activity. The interval 931–1071 (HDLLGLRMTD…GSVLIDLVSS (141 aa)) is N-terminal hotdog fold. The dehydratase (DH) domain stretch occupies residues 931-1243 (HDLLGLRMTD…RSAEADMLVF (313 aa)). One can recognise a PKS/mFAS DH domain in the interval 931-1275 (HDLLGLRMTD…LRSLAALDGA (345 aa)). His-963 serves as the catalytic Proton acceptor; for dehydratase activity. A C-terminal hotdog fold region spans residues 1099-1275 (LQPGEDIPPS…LRSLAALDGA (177 aa)). Asp-1177 functions as the Proton donor; for dehydratase activity in the catalytic mechanism. The tract at residues 1733 to 2045 (GTAHAATFVE…RHENMTKYVV (313 aa)) is enoylreductase (ER) domain. Residues 2069–2252 (ATYVVAGGLG…YMALNIGLIE (184 aa)) form a catalytic ketoreductase (KRc) domain region. Residues 2363–2440 (DIEAFAARAI…ALARKVTLRS (78 aa)) form the Carrier domain. Ser-2400 carries the post-translational modification O-(pantetheine 4'-phosphoryl)serine. A disordered region spans residues 2445 to 2501 (GGAGGDASSTGNSESMARTPSDSSTVPTSIPATPSRSPSREPPAKETLTKSQQHLPI). Residues 2456–2481 (NSESMARTPSDSSTVPTSIPATPSRS) are compositionally biased toward polar residues. The span at 2482–2492 (PSREPPAKETL) shows a compositional bias: basic and acidic residues. The segment at 2864–3084 (HFYSQLNRAF…LGVVRRVVEG (221 aa)) is choline/carnitine acyltransferase domain.

Its pathway is antibiotic biosynthesis. Highly reducing polyketide synthase; part of the gene cluster that mediates the biosynthesis of sordarin and hypoxysordarin, glycoside antibiotics with a unique tetracyclic diterpene aglycone structure. First, the geranylgeranyl diphosphate synthase sdnC constructs GGDP from farnesyl diphosphate and isopentenyl diphosphate. The diterpene cyclase sdnA then catalyzes the cyclization of GGDP to afford cycloaraneosene. Cycloaraneosene is then hydroxylated four times by the putative cytochrome P450 monooxygenases sdnB, sdnE, sdnF and sdnH to give a hydroxylated cycloaraneosene derivative such as cycloaraneosene-8,9,13,19-tetraol. Although the order of the hydroxylations is unclear, at least C8, C9 and C13 of the cycloaraneosene skeleton are hydroxylated before the sordaricin formation. Dehydration of the 13-hydroxy group of the hydroxylated cycloaraneosene derivative might be catalyzed by an unassigned hypothetical protein such as sdnG and sdnP to construct the cyclopentadiene moiety. The FAD-dependent oxidoreductase sdnN is proposed to catalyze the oxidation at C9 of the hydroxylated cycloaraneosene derivative and also catalyze the Baeyer-Villiger oxidation to give the lactone intermediate. The presumed lactone intermediate would be hydrolyzed to give an acrolein moiety and a carboxylate moiety. Then, [4+2]cycloaddition would occur between the acrolein moiety and the cyclopentadiene moiety to give sordaricin. SdnN might also be involved in the [4+2]cycloaddition after the hypothesized oxidation to accommodate the oxidized product and prompt the [4+2]cycloaddition. GDP-6-deoxy-D-altrose may be biosynthesized from GDP-D-mannose by the putative GDP-mannose-4,6-dehydratase sdnI and the short-chain dehydrogenase sdnK. The glycosyltransferase sdnJ catalyzes the attachment of 6-deoxy-D-altrose onto the 19-hydroxy group of sordaricin to give 4'-O-demethylsordarin. The methyltransferase sdnD would complete the biosynthesis of sordarin. Sordarin can be further modified into hypoxysordarin. The unique acyl chain at the 3'-hydroxy group of hypoxysordarin would be constructed by an iterative type I PKS sdnO and the trans-acting polyketide methyltransferase sdnL. SdnL would be responsible for the introduction of an alpha-methyl group of the polyketide chain. Alternatively, the putative beta-lactamase-like sdnR might be responsible for the cleavage and transfer of the polyketide chain from the PKS sdnO to sordarin. Two putative cytochrome P450 monooxygenases, sdnQ and sdnT, might catalyze the epoxidations of the polyketide chain to complete the biosynthesis of hypoxysordarin. Transcriptional regulators sdnM and sdnS are presumably encoded for the transcriptional regulation of the expression of the sdn gene cluster. This chain is Highly reducing polyketide synthase sdnO, found in Sordaria araneosa (Pleurage araneosa).